We begin with the raw amino-acid sequence, 875 residues long: Serine/threonine-protein phosphatase 4 regulatory subunit 4 (875 aa).

2 HEAT repeats span residues 215–253 (ILPL…TKNV) and 254–292 (VLPE…RSQT). A coiled-coil region spans residues 686 to 730 (MFQKKNYEKDLLDQEKEREELLFLEMEQLEKEKHQSDGRLASDKS). The segment covering 718–739 (KHQSDGRLASDKSFEKKRRDSR) has biased composition (basic and acidic residues). Residues 718–773 (KHQSDGRLASDKSFEKKRRDSRTSTQSLSKNLPISVPGPSSSTASTSKEIKKSKLT) are disordered. Positions 740-764 (TSTQSLSKNLPISVPGPSSSTASTS) are enriched in polar residues. Ser-777 is modified (phosphoserine). Phosphothreonine is present on Thr-799. Positions 825–859 (RNASSVPASFSPNPVMPSTSRGPGNTADPKSSGSK) are enriched in polar residues. Positions 825-875 (RNASSVPASFSPNPVMPSTSRGPGNTADPKSSGSKDAQPRKATLKSRKSNP) are disordered. Over residues 866–875 (ATLKSRKSNP) the composition is skewed to basic residues.

As to quaternary structure, serine/threonine-protein phosphatase 4 (PP4) occurs in different assemblies of the catalytic and one or more regulatory subunits. Component of the PP4 complex PPP4C-PPP4R4.

It is found in the cytoplasm. Putative regulatory subunit of serine/threonine-protein phosphatase 4. The chain is Serine/threonine-protein phosphatase 4 regulatory subunit 4 (Ppp4r4) from Mus musculus (Mouse).